The sequence spans 128 residues: MVHGTGIDLVDIDRLEKILMKWDMSFLKKVFSPAEIEYCAKRAFPAIHYAARFAAKESFLKSLGMGIGMGIPLKDIEVRNDPLGRPVLNLYGKALEILEKRGITTVHVSLSHSRSQAGAVVILEGLKD.

The Mg(2+) site is built by Asp-8 and Glu-57.

The protein belongs to the P-Pant transferase superfamily. AcpS family. It depends on Mg(2+) as a cofactor.

It localises to the cytoplasm. It catalyses the reaction apo-[ACP] + CoA = holo-[ACP] + adenosine 3',5'-bisphosphate + H(+). Transfers the 4'-phosphopantetheine moiety from coenzyme A to a Ser of acyl-carrier-protein. The chain is Holo-[acyl-carrier-protein] synthase from Syntrophus aciditrophicus (strain SB).